The following is a 322-amino-acid chain: 4-hydroxythreonine-4-phosphate dehydrogenase (322 aa).

Thr132 provides a ligand contact to substrate. The a divalent metal cation site is built by His160, His205, and His260. Substrate is bound by residues Lys268, Asn277, and Arg286.

This sequence belongs to the PdxA family. In terms of assembly, homodimer. Zn(2+) serves as cofactor. The cofactor is Mg(2+). Co(2+) is required as a cofactor.

The protein resides in the cytoplasm. It carries out the reaction 4-(phosphooxy)-L-threonine + NAD(+) = 3-amino-2-oxopropyl phosphate + CO2 + NADH. It participates in cofactor biosynthesis; pyridoxine 5'-phosphate biosynthesis; pyridoxine 5'-phosphate from D-erythrose 4-phosphate: step 4/5. Its function is as follows. Catalyzes the NAD(P)-dependent oxidation of 4-(phosphooxy)-L-threonine (HTP) into 2-amino-3-oxo-4-(phosphooxy)butyric acid which spontaneously decarboxylates to form 3-amino-2-oxopropyl phosphate (AHAP). The chain is 4-hydroxythreonine-4-phosphate dehydrogenase from Xanthomonas campestris pv. campestris (strain B100).